Consider the following 468-residue polypeptide: Lysosomal dipeptide transporter MFSD1 (468 aa).

The disordered stretch occupies residues 1–25 (MEDEEEEARALLPGGSDEAGRETRA). The Dileucine internalization motif signature appears at 11–12 (LL). 12 helical membrane-spanning segments follow: residues 42–62 (LAHR…SYFC), 86–106 (LLYA…GFLI), 116–136 (TIIF…GGIF), 138–158 (AFWL…SLAV), 173–194 (LNLV…NMNL), 218–238 (LMIG…LAYL), 270–290 (WLIF…IGLV), 307–327 (AINS…GLLV), 334–354 (IIWV…LAFT), 364–384 (LLGL…AFVV), 395–415 (FMQS…GMIL), and 421–441 (LFLE…VVLL).

It belongs to the major facilitator superfamily. Homodimer. Interacts with lysosomal protein GLMP (via lumenal domain); the interaction starts while both proteins are still in the endoplasmic reticulum and is required for stabilization of MFSD1 in lysosomes but has no direct effect on its targeting to lysosomes or transporter activity.

The protein localises to the lysosome membrane. The enzyme catalyses L-alpha-aminoacyl-L-arginine(out) = L-alpha-aminoacyl-L-arginine(in). The catalysed reaction is L-arginyl-L-alpha-amino acid(out) = L-arginyl-L-alpha-amino acid(in). It catalyses the reaction L-arginyl-glycine(out) = L-arginyl-glycine(in). It carries out the reaction L-alpha-aminoacyl-L-lysine(out) = L-alpha-aminoacyl-L-lysine(in). The enzyme catalyses L-aspartyl-L-lysine(out) = L-aspartyl-L-lysine(in). The catalysed reaction is L-alanyl-L-lysine(out) = L-alanyl-L-lysine(in). It catalyses the reaction L-lysyl-L-alpha-amino acid(out) = L-lysyl-L-alpha-amino acid(in). It carries out the reaction L-lysyl-L-alanine(out) = L-lysyl-L-alanine(in). The enzyme catalyses L-lysyl-L-lysine(out) = L-lysyl-L-lysine(in). The catalysed reaction is L-lysyl-glycine(out) = L-lysyl-glycine(in). It catalyses the reaction L-alpha-aminoacyl-L-histidine(out) = L-alpha-aminoacyl-L-histidine(in). It carries out the reaction L-histidyl-L-alpha-amino acid(out) = L-histidyl-L-alpha-amino acid(in). The enzyme catalyses L-histidyl-glycine(out) = L-histidyl-glycine(in). In terms of biological role, lysosomal dipeptide uniporter that selectively exports lysine, arginine or histidine-containing dipeptides with a net positive charge from the lysosome lumen into the cytosol. Could play a role in a specific type of protein O-glycosylation indirectly regulating macrophages migration and tissue invasion. Also essential for liver homeostasis. The chain is Lysosomal dipeptide transporter MFSD1 from Bos taurus (Bovine).